The primary structure comprises 910 residues: Protein translocase subunit SecA (910 aa).

ATP is bound by residues Gln-87, 105-109, and Asp-508; that span reads GEGKT. The segment at 848–910 is disordered; sequence RLSQSQFQHQ…KYKHCHGQLS (63 aa). Positions 869 to 880 are enriched in low complexity; that stretch reads AQVQAAQQGVAQ. 4 residues coordinate Zn(2+): Cys-894, Cys-896, Cys-905, and His-906. Basic residues predominate over residues 900 to 910; sequence KKYKHCHGQLS.

Belongs to the SecA family. In terms of assembly, monomer and homodimer. Part of the essential Sec protein translocation apparatus which comprises SecA, SecYEG and auxiliary proteins SecDF-YajC and YidC. The cofactor is Zn(2+).

The protein resides in the cell inner membrane. Its subcellular location is the cytoplasm. It carries out the reaction ATP + H2O + cellular proteinSide 1 = ADP + phosphate + cellular proteinSide 2.. Functionally, part of the Sec protein translocase complex. Interacts with the SecYEG preprotein conducting channel. Has a central role in coupling the hydrolysis of ATP to the transfer of proteins into and across the cell membrane, serving both as a receptor for the preprotein-SecB complex and as an ATP-driven molecular motor driving the stepwise translocation of polypeptide chains across the membrane. The polypeptide is Protein translocase subunit SecA (Stenotrophomonas maltophilia (strain K279a)).